The chain runs to 165 residues: 3-isopropylmalate dehydratase small subunit (165 aa).

Belongs to the LeuD family. LeuD type 2 subfamily. In terms of assembly, heterodimer of LeuC and LeuD.

It carries out the reaction (2R,3S)-3-isopropylmalate = (2S)-2-isopropylmalate. Its pathway is amino-acid biosynthesis; L-leucine biosynthesis; L-leucine from 3-methyl-2-oxobutanoate: step 2/4. Catalyzes the isomerization between 2-isopropylmalate and 3-isopropylmalate, via the formation of 2-isopropylmaleate. This Helicobacter hepaticus (strain ATCC 51449 / 3B1) protein is 3-isopropylmalate dehydratase small subunit.